The chain runs to 59 residues: Large ribosomal subunit protein bL32 (59 aa).

Positions 1 to 25 are disordered; sequence MAVQQNKKSPSKRGMHRAHDFLTAP.

The protein belongs to the bacterial ribosomal protein bL32 family.

The protein is Large ribosomal subunit protein bL32 of Azoarcus sp. (strain BH72).